We begin with the raw amino-acid sequence, 67 residues long: Myrmicitoxin(1)-Pm6a (67 aa).

The first 25 residues, 1 to 25 (MRSLYLSFSLTIIFVLVIMHAEAKA), serve as a signal peptide directing secretion. Positions 26 to 37 (ISEPNAIAEADP) are excised as a propeptide. Valine 66 bears the Valine amide mark.

Belongs to the formicidae venom clade 3 family. Expressed by the venom gland.

Its subcellular location is the secreted. Functionally, toxin that causes a rapid and irreversible paralysis when intrathoracically injected into insects (blowflies). Does not cause spontaneous nocifensive behaviors by intraplantar injection in mice. Exhibits hemolytic and cytotoxic activities on HEK293 cells. This chain is Myrmicitoxin(1)-Pm6a, found in Pogonomyrmex maricopa (Maricopa harvester ant).